The sequence spans 31 residues: Cyclotide psybry B (31 aa).

Residues 1-31 (GFNPCGETCWNKPTCHAPGCTCSIANICVRN) constitute a cross-link (cyclopeptide (Gly-Asn)). Intrachain disulfides connect Cys-5–Cys-20, Cys-9–Cys-22, and Cys-15–Cys-28.

Post-translationally, this is a cyclic peptide.

Functionally, probably participates in a plant defense mechanism. The chain is Cyclotide psybry B from Psychotria brachyceras.